The sequence spans 353 residues: MVLSLQTLTKKVLARQYPAQCHHHFLKCCGLWWHDGPIVYHQNQKKIWSSFFTDGVNINAALVKAVKENNYDLIVLFTEWGANIDYSLLSVNTECTRDLCRELGAKEQLKQQEVLHFFNMVKRDLTGSNIILCHEVFSHNPILETINRTKLRGIIYEQLEALMENTDILSELLTKYWYGMAVEFNLTKAIHYFYQRYAHLHQWRLMCALFYNNVFDLHELYTKEKVRMDMDEMLKWACRKNYNYLTIYYCCIVLGADLNKAMFHSIQFYNLGNIFFCIDLGADAFEEGKTVAYQNDKSFIASILSLNCYSKNDSLSLKETDPEVIKRMLKDYHSKNMSMAHKYYIKYGFDNID.

Belongs to the asfivirus MGF 360 family. In terms of assembly, interacts with host STAT1; this interaction mediates STAT1 degradation through apoptosis. Interacts with host STAT2; this interaction mediates STAT2 degradation through the proteasome.

The protein resides in the host cytoplasm. Plays a role in virus cell tropism, and may be required for efficient virus replication in macrophages. In addition, inhibits IFN-beta-induced IFN-stimulated genes (ISGs) transcription. Mechanistically, degrades host STAT1 and STAT2 through apoptosis and ubiquitin-proteasome pathways respectively. The polypeptide is Protein MGF 360-9L (African swine fever virus (isolate Tick/Malawi/Lil 20-1/1983) (ASFV)).